The following is a 153-amino-acid chain: UPF0225 protein ETA_15740 (153 aa).

It belongs to the UPF0225 family.

The polypeptide is UPF0225 protein ETA_15740 (Erwinia tasmaniensis (strain DSM 17950 / CFBP 7177 / CIP 109463 / NCPPB 4357 / Et1/99)).